Reading from the N-terminus, the 392-residue chain is Methylthioribose-1-phosphate isomerase (392 aa).

The active-site Proton donor is aspartate 268.

The protein belongs to the eIF-2B alpha/beta/delta subunits family. MtnA subfamily.

The protein resides in the cytoplasm. The protein localises to the nucleus. It catalyses the reaction 5-(methylsulfanyl)-alpha-D-ribose 1-phosphate = 5-(methylsulfanyl)-D-ribulose 1-phosphate. It participates in amino-acid biosynthesis; L-methionine biosynthesis via salvage pathway; L-methionine from S-methyl-5-thio-alpha-D-ribose 1-phosphate: step 1/6. Catalyzes the interconversion of methylthioribose-1-phosphate (MTR-1-P) into methylthioribulose-1-phosphate (MTRu-1-P). In Ajellomyces capsulatus (strain G186AR / H82 / ATCC MYA-2454 / RMSCC 2432) (Darling's disease fungus), this protein is Methylthioribose-1-phosphate isomerase.